The chain runs to 445 residues: Glutamyl-tRNA(Gln) amidotransferase subunit D (445 aa).

The 333-residue stretch at 93–425 (SEIKIISTGG…EKIRSLMISN (333 aa)) folds into the Asparaginase/glutaminase domain. Catalysis depends on residues Thr-103, Thr-179, Asp-180, and Lys-258.

It belongs to the asparaginase 1 family. GatD subfamily. As to quaternary structure, heterodimer of GatD and GatE.

The catalysed reaction is L-glutamyl-tRNA(Gln) + L-glutamine + ATP + H2O = L-glutaminyl-tRNA(Gln) + L-glutamate + ADP + phosphate + H(+). In terms of biological role, allows the formation of correctly charged Gln-tRNA(Gln) through the transamidation of misacylated Glu-tRNA(Gln) in organisms which lack glutaminyl-tRNA synthetase. The reaction takes place in the presence of glutamine and ATP through an activated gamma-phospho-Glu-tRNA(Gln). The GatDE system is specific for glutamate and does not act on aspartate. This chain is Glutamyl-tRNA(Gln) amidotransferase subunit D, found in Saccharolobus islandicus (strain L.S.2.15 / Lassen #1) (Sulfolobus islandicus).